A 124-amino-acid polypeptide reads, in one-letter code: Ribonuclease pancreatic (124 aa).

Positions 1–13 are enriched in basic and acidic residues; it reads SETAAEKFERQHM. A disordered region spans residues 1-23; it reads SETAAEKFERQHMDSYSSSSSNS. Lysine 7 and arginine 10 together coordinate substrate. The active-site Proton acceptor is the histidine 12. 4 disulfides stabilise this stretch: cysteine 26-cysteine 84, cysteine 40-cysteine 95, cysteine 58-cysteine 110, and cysteine 65-cysteine 72. Substrate-binding positions include 41-45, lysine 66, and arginine 85; that span reads KPVNT. The Proton donor role is filled by histidine 119.

The protein belongs to the pancreatic ribonuclease family. As to quaternary structure, monomer. Interacts with and forms tight 1:1 complexes with RNH1. Dimerization of two such complexes may occur. Interaction with RNH1 inhibits this protein. As to expression, pancreas.

It localises to the secreted. The enzyme catalyses an [RNA] containing cytidine + H2O = an [RNA]-3'-cytidine-3'-phosphate + a 5'-hydroxy-ribonucleotide-3'-[RNA].. It carries out the reaction an [RNA] containing uridine + H2O = an [RNA]-3'-uridine-3'-phosphate + a 5'-hydroxy-ribonucleotide-3'-[RNA].. Its function is as follows. Endonuclease that catalyzes the cleavage of RNA on the 3' side of pyrimidine nucleotides. Acts on single-stranded and double-stranded RNA. The chain is Ribonuclease pancreatic (RNASE1) from Camelus bactrianus (Bactrian camel).